A 364-amino-acid polypeptide reads, in one-letter code: MKALILVGGFGTRLRPLTLSWPKPLVEFCNKAMILHQIEALVKAGVKDIVLAVNYRPEVMVSVLKKTEEEFGINIHFSVETEPLGTAGPLALAREILGKDDSPFFVLNSDVTCVYPFEAFRDFHIAHKCEGSIMVTKVAEPSAYGVVVTKPNSTVIDRFVEKPVEFVGNRINAGIYIFNPSVLDRIELRPTSIEKEIFPAIAADQQLHSFDLQGFWMDVGQPKDFLAGTCLYLSHLTSQHSPLLTDPSQNKWVYGGNVMVDPSAEIDPTAVIGPNVVIGPDAKIGPGVRLQRCVIMSNATVRDHSWIANSIVGWNSTVGRWTRVENITVLGDDVTIKDELYVNGASVLPHKSISTSITEPRIVM.

The protein belongs to the transferase hexapeptide repeat family.

The protein localises to the cytoplasm. The catalysed reaction is alpha-D-mannose 1-phosphate + GTP + H(+) = GDP-alpha-D-mannose + diphosphate. It participates in nucleotide-sugar biosynthesis; GDP-alpha-D-mannose biosynthesis; GDP-alpha-D-mannose from alpha-D-mannose 1-phosphate (GTP route): step 1/1. Its function is as follows. Involved in cell wall synthesis where it is required for glycosylation. Involved in cell cycle progression through cell-size checkpoint. The protein is Mannose-1-phosphate guanyltransferase (MPG1) of Cryptococcus neoformans var. neoformans serotype D (strain B-3501A) (Filobasidiella neoformans).